Consider the following 185-residue polypeptide: uncharacterized protein (185 aa).

The next 3 helical transmembrane spans lie at 9 to 29 (LVAA…WAFL), 72 to 92 (VLFF…ILIV), and 111 to 131 (FFFI…IPFL).

The protein localises to the cell membrane. This is an uncharacterized protein from Bacillus subtilis (strain 168).